The following is a 37-amino-acid chain: ATFTVINKCQYTVWAAAVPAGGGQKLDAGQTWSIXXP.

It belongs to the thaumatin family.

Its function is as follows. Has antifungal activity. Inhibits the growth of Trichoderma viridae and Candida albicans. This Hordeum vulgare (Barley) protein is Antifungal protein S.